Consider the following 518-residue polypeptide: Serine/threonine-protein kinase UL13 (518 aa).

2 disordered regions span residues M1–A22 and S39–P120. The span at G44–P61 shows a compositional bias: low complexity. One can recognise a Protein kinase domain in the interval P151 to S518. ATP is bound by residues G157 to V165 and K176. D277 serves as the catalytic Proton acceptor.

The protein belongs to the protein kinase superfamily. Ser/Thr protein kinase family. In terms of processing, autophosphorylated.

It is found in the virion tegument. The protein resides in the host nucleus. The enzyme catalyses L-seryl-[protein] + ATP = O-phospho-L-seryl-[protein] + ADP + H(+). It carries out the reaction L-threonyl-[protein] + ATP = O-phospho-L-threonyl-[protein] + ADP + H(+). Its function is as follows. Multifunctional serine/threonine kinase that plays a role in several processes including egress of virus particles from the nucleus, modulation of the actin cytoskeleton and regulation of viral and cellular gene expression. Regulates the nuclear localization of viral envelopment factors UL34 and UL31, by phosphorylating the US3 kinase, indicating a role in nuclear egress. Disrupts host nuclear lamins, including LMNA and LMNB1. Phosphorylates the viral Fc receptor composed of glycoproteins E (gE) and I (gI). Phosphorylation of glycoprotein E (gE) by UL13 alters its subcellular localization, from the host early endosome to the plasma membrane. Participates in the transcriptional regulation of cellular and viral mRNAs mainly by phosphorylating the viral transcriptional regulator ICP22. Additional substrates have been identified, including UL41, UL49 or host EF1D. The sequence is that of Serine/threonine-protein kinase UL13 from Homo sapiens (Human).